We begin with the raw amino-acid sequence, 203 residues long: uncharacterized protein (203 aa).

The interval 1–23 (MGSSFVIDRSSSSPAPPRGPAPK) is disordered.

This is an uncharacterized protein from Saccharomyces cerevisiae (strain ATCC 204508 / S288c) (Baker's yeast).